The primary structure comprises 328 residues: Malate dehydrogenase (328 aa).

13-19 provides a ligand contact to NAD(+); it reads GAAGQIS. The substrate site is built by R94 and R100. NAD(+) is bound by residues N107, Q114, and 131–133; that span reads VGN. Substrate is bound by residues N133 and R164. H189 acts as the Proton acceptor in catalysis.

The protein belongs to the LDH/MDH superfamily. MDH type 2 family.

The catalysed reaction is (S)-malate + NAD(+) = oxaloacetate + NADH + H(+). Catalyzes the reversible oxidation of malate to oxaloacetate. In Alcanivorax borkumensis (strain ATCC 700651 / DSM 11573 / NCIMB 13689 / SK2), this protein is Malate dehydrogenase.